We begin with the raw amino-acid sequence, 156 residues long: MKLQLIAVGTRMPDWVTTGFQEYQRRFPRDMALELVEIPAGKRGKNADIARILHKEGEQMLAAIPKSNHIVSLDLPGKTWTTPDLATQLGKWQLDGRDVSLLIGGPEGLAPACKQAASQSWCLSALTLPHPLVRVVVAESLYRAWSVNNNHPYHRE.

S-adenosyl-L-methionine is bound by residues leucine 73, glycine 104, and 123 to 128 (LSALTL).

Belongs to the RNA methyltransferase RlmH family. Homodimer.

It is found in the cytoplasm. It carries out the reaction pseudouridine(1915) in 23S rRNA + S-adenosyl-L-methionine = N(3)-methylpseudouridine(1915) in 23S rRNA + S-adenosyl-L-homocysteine + H(+). Functionally, specifically methylates the pseudouridine at position 1915 (m3Psi1915) in 23S rRNA. This is Ribosomal RNA large subunit methyltransferase H from Shewanella sediminis (strain HAW-EB3).